We begin with the raw amino-acid sequence, 279 residues long: Shikimate dehydrogenase (NADP(+)) (279 aa).

Residues 19–21 and threonine 66 contribute to the shikimate site; that span reads SFS. Residue lysine 70 is the Proton acceptor of the active site. Residue glutamate 82 participates in NADP(+) binding. Residues asparagine 91 and aspartate 106 each coordinate shikimate. Residues 130-134 and leucine 222 each bind NADP(+); that span reads GSGGA. Tyrosine 224 contacts shikimate. Glycine 245 is an NADP(+) binding site.

This sequence belongs to the shikimate dehydrogenase family. As to quaternary structure, homodimer.

It catalyses the reaction shikimate + NADP(+) = 3-dehydroshikimate + NADPH + H(+). The protein operates within metabolic intermediate biosynthesis; chorismate biosynthesis; chorismate from D-erythrose 4-phosphate and phosphoenolpyruvate: step 4/7. In terms of biological role, involved in the biosynthesis of the chorismate, which leads to the biosynthesis of aromatic amino acids. Catalyzes the reversible NADPH linked reduction of 3-dehydroshikimate (DHSA) to yield shikimate (SA). In Methanococcus maripaludis (strain C6 / ATCC BAA-1332), this protein is Shikimate dehydrogenase (NADP(+)).